A 478-amino-acid polypeptide reads, in one-letter code: UDP-N-acetylmuramate--L-alanine ligase (478 aa).

126–132 (GTHGKTT) contributes to the ATP binding site.

It belongs to the MurCDEF family.

The protein resides in the cytoplasm. The catalysed reaction is UDP-N-acetyl-alpha-D-muramate + L-alanine + ATP = UDP-N-acetyl-alpha-D-muramoyl-L-alanine + ADP + phosphate + H(+). The protein operates within cell wall biogenesis; peptidoglycan biosynthesis. Functionally, cell wall formation. The polypeptide is UDP-N-acetylmuramate--L-alanine ligase (Synechococcus sp. (strain JA-2-3B'a(2-13)) (Cyanobacteria bacterium Yellowstone B-Prime)).